The sequence spans 466 residues: 3-isopropylmalate dehydratase large subunit (466 aa).

Residues Cys347, Cys407, and Cys410 each contribute to the [4Fe-4S] cluster site.

It belongs to the aconitase/IPM isomerase family. LeuC type 1 subfamily. As to quaternary structure, heterodimer of LeuC and LeuD. It depends on [4Fe-4S] cluster as a cofactor.

The enzyme catalyses (2R,3S)-3-isopropylmalate = (2S)-2-isopropylmalate. It participates in amino-acid biosynthesis; L-leucine biosynthesis; L-leucine from 3-methyl-2-oxobutanoate: step 2/4. Catalyzes the isomerization between 2-isopropylmalate and 3-isopropylmalate, via the formation of 2-isopropylmaleate. The protein is 3-isopropylmalate dehydratase large subunit of Escherichia coli O45:K1 (strain S88 / ExPEC).